A 108-amino-acid polypeptide reads, in one-letter code: Transmembrane protein 265 (108 aa).

Transmembrane regions (helical) follow at residues 34–54 and 78–98; these read AATSIICGCSCLGVMALVFAI and LILASFAVWLAVLILGPLLLW.

This sequence belongs to the CD225/Dispanin family.

It localises to the membrane. The polypeptide is Transmembrane protein 265 (Homo sapiens (Human)).